The following is a 375-amino-acid chain: Chaperone protein DnaJ (375 aa).

Residues 5-70 enclose the J domain; sequence DFYETLGVAK…QKRAAYDRYG (66 aa). The CR-type zinc-finger motif lies at 136–214; that stretch reads GKTAQIRVPT…CHGQGRVTEE (79 aa). Zn(2+) is bound by residues Cys149, Cys152, Cys166, Cys169, Cys188, Cys191, Cys202, and Cys205. CXXCXGXG motif repeat units follow at residues 149-156, 166-173, 188-195, and 202-209; these read CDVCSGSG, CGTCQGTG, CPTCHGRG, and CPKCHGQG.

The protein belongs to the DnaJ family. In terms of assembly, homodimer. It depends on Zn(2+) as a cofactor.

Its subcellular location is the cytoplasm. Functionally, participates actively in the response to hyperosmotic and heat shock by preventing the aggregation of stress-denatured proteins and by disaggregating proteins, also in an autonomous, DnaK-independent fashion. Unfolded proteins bind initially to DnaJ; upon interaction with the DnaJ-bound protein, DnaK hydrolyzes its bound ATP, resulting in the formation of a stable complex. GrpE releases ADP from DnaK; ATP binding to DnaK triggers the release of the substrate protein, thus completing the reaction cycle. Several rounds of ATP-dependent interactions between DnaJ, DnaK and GrpE are required for fully efficient folding. Also involved, together with DnaK and GrpE, in the DNA replication of plasmids through activation of initiation proteins. The polypeptide is Chaperone protein DnaJ (Rhizobium etli (strain ATCC 51251 / DSM 11541 / JCM 21823 / NBRC 15573 / CFN 42)).